The chain runs to 689 residues: Glycine--tRNA ligase beta subunit (689 aa).

Belongs to the class-II aminoacyl-tRNA synthetase family. Tetramer of two alpha and two beta subunits.

It localises to the cytoplasm. The enzyme catalyses tRNA(Gly) + glycine + ATP = glycyl-tRNA(Gly) + AMP + diphosphate. The sequence is that of Glycine--tRNA ligase beta subunit from Salmonella dublin (strain CT_02021853).